The following is a 421-amino-acid chain: Synaptotagmin-12 (421 aa).

Residues 1-18 are Vesicular-facing; sequence MAVDVTEYHLSVIKSPPG. A helical transmembrane segment spans residues 19 to 39; sequence WEVGVYAAGALALLGIAAVSL. Over 40–421 the chain is Cytoplasmic; that stretch reads WKLWTSGSFP…VSMWHPVRRN (382 aa). Serine 97 carries the phosphoserine; by PKA modification. Residues serine 99 and serine 214 each carry the phosphoserine modification. C2 domains are found at residues 152-272 and 283-416; these read TLGQ…SGWL and AVGE…SMWH.

The protein belongs to the synaptotagmin family. As to quaternary structure, homodimer. Can also form heterodimers. Interacts with SYT1. In terms of processing, phosphorylation of Ser-97 is required for mossy-fiber long-term potentiation. As to expression, expressed in the brain, specifically in neurons of the cerebellum, cortex, hippocampus, olfactory bulb, brainstem and spinal cord (at protein level).

It localises to the cytoplasmic vesicle. The protein resides in the secretory vesicle. The protein localises to the synaptic vesicle membrane. Its function is as follows. Synaptic vesicle phosphoprotein that enhances spontaneous neurotransmitter release but does not effect induced neurotransmitter release. Unlike other synaptotagmins, it does not bind Ca(2+) or phospholipids. Essential for mossy-fiber long-term potentiation in the hippocampus. The sequence is that of Synaptotagmin-12 from Rattus norvegicus (Rat).